The following is a 509-amino-acid chain: Scavenger receptor class B member 1 (509 aa).

Topologically, residues 1 to 11 are cytoplasmic; that stretch reads MGVSSRARWVA. Residues 12-32 traverse the membrane as a helical segment; that stretch reads LGLGVLGLLCAALGVIMILMV. Residues 33–440 lie on the Extracellular side of the membrane; the sequence is PSLIKQQVLK…YTQLVLMPQV (408 aa). 10 N-linked (GlcNAc...) asparagine glycosylation sites follow: asparagine 102, asparagine 108, asparagine 116, asparagine 173, asparagine 212, asparagine 227, asparagine 255, asparagine 310, asparagine 330, and asparagine 383. The cysteines at positions 251 and 384 are disulfide-linked. Residues 441–461 form a helical membrane-spanning segment; that stretch reads LHYAQYVLLGLGGLLLLVPII. The Cytoplasmic portion of the chain corresponds to 462-509; the sequence is YQLRSQEKCFLFWSGSKKGSQDKEAMQAYSESLMSPAAKGTVLQEAKL.

Belongs to the CD36 family. The C-terminal region binds to PDZK1. In terms of processing, N-glycosylated. Post-translationally, the six cysteines of the extracellular domain are all involved in intramolecular disulfide bonds.

The protein resides in the cell membrane. It is found in the membrane. Its subcellular location is the caveola. Its function is as follows. Receptor for different ligands such as phospholipids, cholesterol ester, lipoproteins, phosphatidylserine and apoptotic cells. Receptor for HDL, mediating selective uptake of cholesteryl ether and HDL-dependent cholesterol efflux. Also facilitates the flux of free and esterified cholesterol between the cell surface and apoB-containing lipoproteins and modified lipoproteins, although less efficiently than HDL. May be involved in the phagocytosis of apoptotic cells, via its phosphatidylserine binding activity. The protein is Scavenger receptor class B member 1 (Scarb1) of Rattus norvegicus (Rat).